Consider the following 153-residue polypeptide: Arachidonate 5-lipoxygenase-activating protein (153 aa).

Topologically, residues 1-8 (MDQETVGN) are lumenal. A helical transmembrane segment spans residues 9–30 (IVLLAIVTLISVVQNGFFAHKV). The Cytoplasmic portion of the chain corresponds to 31 to 52 (EHESKTHNGRSFQRTGPLAFER). The helical transmembrane segment at 53–77 (VYTANQNCVDAYPTFLVMLWSAGLL) threads the bilayer. At 78 to 80 (CSQ) the chain is on the lumenal side. A helical transmembrane segment spans residues 81–102 (VPAAFAGLMYLFVRQKYFVGYL). The Cytoplasmic segment spans residues 103–107 (GERTQ). Residues 108–115 (STPGYIFG) lie within the membrane without spanning it. The helical transmembrane segment at 116–128 (KRIILFLFAMSLA) threads the bilayer. Over 129–153 (GILNYFLIAFFGSDFENYIKTVTTT) the chain is Lumenal.

This sequence belongs to the MAPEG family. Homotrimer. Interacts with LTC4S and ALOX5.

The protein localises to the nucleus membrane. It localises to the endoplasmic reticulum membrane. Its function is as follows. Required for leukotriene biosynthesis by ALOX5 (5-lipoxygenase). Anchors ALOX5 to the membrane. Binds arachidonic acid, and could play an essential role in the transfer of arachidonic acid to ALOX5. Binds to MK-886, a compound that blocks the biosynthesis of leukotrienes. In Ovis aries (Sheep), this protein is Arachidonate 5-lipoxygenase-activating protein (ALOX5AP).